A 192-amino-acid chain; its full sequence is tRNA (cytidine(56)-2'-O)-methyltransferase (192 aa).

S-adenosyl-L-methionine is bound by residues Leu84 and 112–116; that span reads GGEKV.

The protein belongs to the aTrm56 family. In terms of assembly, homodimer.

The protein resides in the cytoplasm. The enzyme catalyses cytidine(56) in tRNA + S-adenosyl-L-methionine = 2'-O-methylcytidine(56) in tRNA + S-adenosyl-L-homocysteine + H(+). Its function is as follows. Specifically catalyzes the AdoMet-dependent 2'-O-ribose methylation of cytidine at position 56 in tRNAs. The chain is tRNA (cytidine(56)-2'-O)-methyltransferase from Halobacterium salinarum (strain ATCC 700922 / JCM 11081 / NRC-1) (Halobacterium halobium).